The following is a 169-amino-acid chain: NAD(P)H-quinone oxidoreductase subunit J, chloroplastic (169 aa).

This sequence belongs to the complex I 30 kDa subunit family. As to quaternary structure, NDH is composed of at least 16 different subunits, 5 of which are encoded in the nucleus.

The protein localises to the plastid. It is found in the chloroplast thylakoid membrane. It carries out the reaction a plastoquinone + NADH + (n+1) H(+)(in) = a plastoquinol + NAD(+) + n H(+)(out). The catalysed reaction is a plastoquinone + NADPH + (n+1) H(+)(in) = a plastoquinol + NADP(+) + n H(+)(out). Functionally, NDH shuttles electrons from NAD(P)H:plastoquinone, via FMN and iron-sulfur (Fe-S) centers, to quinones in the photosynthetic chain and possibly in a chloroplast respiratory chain. The immediate electron acceptor for the enzyme in this species is believed to be plastoquinone. Couples the redox reaction to proton translocation, and thus conserves the redox energy in a proton gradient. The chain is NAD(P)H-quinone oxidoreductase subunit J, chloroplastic from Marchantia polymorpha (Common liverwort).